A 197-amino-acid chain; its full sequence is Phosphoheptose isomerase (197 aa).

An SIS domain is found at 36–197; sequence MVQCLVSEGK…IDQQLFGSTE (162 aa). Residue 51–53 coordinates substrate; sequence NGG. His-60 and Glu-64 together coordinate Zn(2+). Residues Glu-64, 93-94, 119-121, Ser-124, and Gln-174 each bind substrate; these read ND and STS. 2 residues coordinate Zn(2+): Gln-174 and His-182.

The protein belongs to the SIS family. GmhA subfamily. In terms of assembly, homotetramer. Zn(2+) serves as cofactor.

It is found in the cytoplasm. It catalyses the reaction 2 D-sedoheptulose 7-phosphate = D-glycero-alpha-D-manno-heptose 7-phosphate + D-glycero-beta-D-manno-heptose 7-phosphate. It functions in the pathway carbohydrate biosynthesis; D-glycero-D-manno-heptose 7-phosphate biosynthesis; D-glycero-alpha-D-manno-heptose 7-phosphate and D-glycero-beta-D-manno-heptose 7-phosphate from sedoheptulose 7-phosphate: step 1/1. In terms of biological role, catalyzes the isomerization of sedoheptulose 7-phosphate in D-glycero-D-manno-heptose 7-phosphate. This is Phosphoheptose isomerase from Chromohalobacter salexigens (strain ATCC BAA-138 / DSM 3043 / CIP 106854 / NCIMB 13768 / 1H11).